Consider the following 190-residue polypeptide: Voltage-dependent calcium channel gamma-like subunit (190 aa).

Helical transmembrane passes span 25–45, 96–116, 131–151, and 155–175; these read FIRT…SVSI, ALAV…QLCE, LLVS…LLRN, and LIGF…LFLN.

It belongs to the PMP-22/EMP/MP20 family. CACNG subfamily. As to quaternary structure, the L-type calcium channel is composed of five subunits: alpha-1, alpha-2/delta, beta and gamma.

It localises to the membrane. Thought to stabilize the calcium channel in an inactivated (closed) state. Modulates calcium current when coexpressed with CACNA1G. This is Voltage-dependent calcium channel gamma-like subunit from Homo sapiens (Human).